Here is a 701-residue protein sequence, read N- to C-terminus: Lutropin-choriogonadotropic hormone receptor (701 aa).

The signal sequence occupies residues 1–26 (MGRPSLALRLLLALLLLPPPAPLLWA). Over 27-365 (LRPAPCPEPC…EDIMGYNFLR (339 aa)) the chain is Extracellular. Asn101 carries N-linked (GlcNAc...) asparagine glycosylation. 6 LRR repeats span residues 124 to 149 (LPRLKYLSICNTGIHKLPDVTKIFSS), 151 to 173 (FNFILEICDNLHITTIPRNAFQG), 174 to 198 (MNNESITLKLYGNGFEEIQSHAFNG), 200 to 222 (TLISLELKENARLEKMHNDAFRG), 223 to 246 (ATGPSILDISSTKLQALPTYGLES), and 250 to 271 (LIATSSYSLKKLPSREKFTNLL). Asn176 and Asn197 each carry an N-linked (GlcNAc...) asparagine glycan. Asn293, Asn301, and Asn315 each carry an N-linked (GlcNAc...) asparagine glycan. The residue at position 333 (Tyr333) is a Sulfotyrosine. The chain crosses the membrane as a helical span at residues 366 to 387 (VLIWLINILAITGNVTVLFVLL). The Cytoplasmic portion of the chain corresponds to 388–397 (TSRYKLTVPR). A helical membrane pass occupies residues 398 to 418 (FLMCNLSFADFCMGLYLLLIA). The Extracellular segment spans residues 419–441 (SVDAQTKGQYYNHAIDWQTGSGC). A disulfide bridge links Cys441 with Cys516. The chain crosses the membrane as a helical span at residues 442 to 464 (SAAGFFTVFASELSVYTLTVITL). Residues 465 to 484 (ERWHTITYAIQLDQKLRLKH) are Cytoplasmic-facing. A helical membrane pass occupies residues 485–507 (AIPVMLGGWLFSTLIAVLPLVGV). Topologically, residues 508–527 (SNYMKVSICLPMDVESTLSQ) are extracellular. The helical transmembrane segment at 528-551 (VYILTILILNVMAFIIICACYIKI) threads the bilayer. The Cytoplasmic segment spans residues 552-572 (YFAVQNPELMATNKDTKIAKK). The chain crosses the membrane as a helical span at residues 573 to 596 (MAVLIFTDFTCMAPISFFAISAAF). The Extracellular portion of the chain corresponds to 597–607 (KVPLITVTNSK). Residues 608-629 (VLLVLFYPVNSCANPFLYAIFT) form a helical membrane-spanning segment. Topologically, residues 630–701 (KAFQRDFFLL…VLDKTCYKEC (72 aa)) are cytoplasmic. S-palmitoyl cysteine attachment occurs at residues Cys645 and Cys646.

This sequence belongs to the G-protein coupled receptor 1 family. FSH/LSH/TSH subfamily. Post-translationally, sulfated.

Its subcellular location is the cell membrane. Receptor for lutropin-choriogonadotropic hormone. The activity of this receptor is mediated by G proteins which activate adenylate cyclase. This is Lutropin-choriogonadotropic hormone receptor (LHCGR) from Bos taurus (Bovine).